A 442-amino-acid chain; its full sequence is UDP-N-acetylmuramate--L-alanine ligase (442 aa).

110–116 (GAHGKTS) is a binding site for ATP.

It belongs to the MurCDEF family.

It localises to the cytoplasm. The enzyme catalyses UDP-N-acetyl-alpha-D-muramate + L-alanine + ATP = UDP-N-acetyl-alpha-D-muramoyl-L-alanine + ADP + phosphate + H(+). It participates in cell wall biogenesis; peptidoglycan biosynthesis. Functionally, cell wall formation. The chain is UDP-N-acetylmuramate--L-alanine ligase from Streptococcus thermophilus (strain ATCC BAA-491 / LMD-9).